We begin with the raw amino-acid sequence, 307 residues long: Predicted GPI-anchored protein 44 (307 aa).

Residues 1-22 (MLSTNNLLILLIFSFLITNVKS) form the signal peptide. 2 N-linked (GlcNAc...) asparagine glycosylation sites follow: Asn146 and Asn217. The segment at 232–261 (TPQPLLETPSQESSAPNIDSTTPTTIDNTV) is disordered. Positions 239–254 (TPSQESSAPNIDSTTP) are enriched in polar residues. Gly286 is lipidated: GPI-anchor amidated glycine. Residues 287–307 (GAMGYPSISVALGLVFIAYLV) constitute a propeptide, removed in mature form.

It is found in the cell membrane. The sequence is that of Predicted GPI-anchored protein 44 (PGA44) from Candida albicans (strain SC5314 / ATCC MYA-2876) (Yeast).